The primary structure comprises 124 residues: uncharacterized protein (124 aa).

Transmembrane regions (helical) follow at residues lysine 14–glutamine 34, phenylalanine 41–tyrosine 61, and methionine 85–valine 105.

The protein localises to the cell membrane. This is an uncharacterized protein from Haemophilus influenzae (strain ATCC 51907 / DSM 11121 / KW20 / Rd).